The primary structure comprises 315 residues: Olfactory receptor 52R1 (315 aa).

Residues Met1–Leu28 lie on the Extracellular side of the membrane. N-linked (GlcNAc...) asparagine glycosylation occurs at Asn7. Residues Trp29–Leu49 form a helical membrane-spanning segment. The Cytoplasmic segment spans residues His50–Thr57. The chain crosses the membrane as a helical span at residues Leu58–Ser78. At Ser79 to Ile102 the chain is on the extracellular side. Residues Cys100 and Cys192 are joined by a disulfide bond. The helical transmembrane segment at Gln103–Leu123 threads the bilayer. Over Asp124–Ser142 the chain is Cytoplasmic. Residues Val143–Cys163 form a helical membrane-spanning segment. Residues Phe164–Arg199 are Extracellular-facing. A helical transmembrane segment spans residues Gly200–Ser220. Residues Tyr221 to Ala240 lie on the Cytoplasmic side of the membrane. A helical membrane pass occupies residues Phe241–Ser261. Residues Phe262 to His276 are Extracellular-facing. The helical transmembrane segment at Ile277 to Val297 threads the bilayer. Topologically, residues Arg298–Pro315 are cytoplasmic.

Belongs to the G-protein coupled receptor 1 family.

The protein localises to the cell membrane. Odorant receptor. The protein is Olfactory receptor 52R1 (OR52R1) of Homo sapiens (Human).